A 637-amino-acid chain; its full sequence is Chaperone protein DnaK (637 aa).

The residue at position 196 (Thr196) is a Phosphothreonine; by autocatalysis. The disordered stretch occupies residues 598–637 (AEAPGADAPEGQAPQDGGSKKGGEGAVENAEYEVIDGDGK). Acidic residues predominate over residues 627-637 (AEYEVIDGDGK).

The protein belongs to the heat shock protein 70 family.

Acts as a chaperone. The chain is Chaperone protein DnaK from Chlorobium luteolum (strain DSM 273 / BCRC 81028 / 2530) (Pelodictyon luteolum).